A 453-amino-acid chain; its full sequence is Obtusifoliol 14-alpha demethylase (453 aa).

Residue cysteine 395 coordinates heme.

This sequence belongs to the cytochrome P450 family. Requires heme as cofactor.

The protein localises to the membrane. It carries out the reaction a 14alpha-methyl steroid + 3 reduced [NADPH--hemoprotein reductase] + 3 O2 = a Delta(14) steroid + formate + 3 oxidized [NADPH--hemoprotein reductase] + 4 H2O + 4 H(+). The protein operates within steroid biosynthesis; zymosterol biosynthesis; zymosterol from lanosterol: step 1/6. In terms of biological role, catalyzes the 14-alpha demethylation of obtusifoliol to 4 alpha-methyl-5 alpha-ergosta-8,14,24(28)-trien-3 beta-ol. This is Obtusifoliol 14-alpha demethylase (CYP51) from Triticum aestivum (Wheat).